We begin with the raw amino-acid sequence, 379 residues long: Succinate--CoA ligase [ADP-forming] subunit beta (379 aa).

In terms of domain architecture, ATP-grasp spans 9–237 (RDILARYGIP…SSDEPEAEQR (229 aa)). ATP-binding positions include K45, 52 to 54 (GRG), I94, and E99. Mg(2+) contacts are provided by N192 and D206. Residues N257 and 314-316 (GIT) contribute to the substrate site.

Belongs to the succinate/malate CoA ligase beta subunit family. Heterotetramer of two alpha and two beta subunits. Mg(2+) serves as cofactor.

The catalysed reaction is succinate + ATP + CoA = succinyl-CoA + ADP + phosphate. It carries out the reaction GTP + succinate + CoA = succinyl-CoA + GDP + phosphate. It functions in the pathway carbohydrate metabolism; tricarboxylic acid cycle; succinate from succinyl-CoA (ligase route): step 1/1. Its function is as follows. Succinyl-CoA synthetase functions in the citric acid cycle (TCA), coupling the hydrolysis of succinyl-CoA to the synthesis of either ATP or GTP and thus represents the only step of substrate-level phosphorylation in the TCA. The beta subunit provides nucleotide specificity of the enzyme and binds the substrate succinate, while the binding sites for coenzyme A and phosphate are found in the alpha subunit. The protein is Succinate--CoA ligase [ADP-forming] subunit beta of Roseiflexus sp. (strain RS-1).